The sequence spans 94 residues: DNA-directed RNA polymerase subunit omega (94 aa).

Belongs to the RNA polymerase subunit omega family. As to quaternary structure, the RNAP catalytic core consists of 2 alpha, 1 beta, 1 beta' and 1 omega subunit. When a sigma factor is associated with the core the holoenzyme is formed, which can initiate transcription.

It catalyses the reaction RNA(n) + a ribonucleoside 5'-triphosphate = RNA(n+1) + diphosphate. Functionally, promotes RNA polymerase assembly. Latches the N- and C-terminal regions of the beta' subunit thereby facilitating its interaction with the beta and alpha subunits. In Limosilactobacillus fermentum (strain NBRC 3956 / LMG 18251) (Lactobacillus fermentum), this protein is DNA-directed RNA polymerase subunit omega.